A 578-amino-acid chain; its full sequence is Multidrug resistance-like ATP-binding protein MdlB (578 aa).

One can recognise an ABC transmembrane type-1 domain in the interval 25–308 (LILGFTLLLF…ITSQQSIFQQ (284 aa)). 6 consecutive transmembrane segments (helical) span residues 26 to 46 (ILGFTLLLFSSIFEVLNPILI), 59 to 79 (VNYSLKIITYYLILQILAAIL), 143 to 163 (SLFQNIILILITLITMFILEW), 166 to 186 (ACIASIIFPIALIIMLLYQYF), 196 to 216 (VYIANIYNIFNEIINGIDVIQ), and 260 to 280 (LILCGLILIFGIYPIGFFEIG). An ABC transporter domain is found at 339-573 (IKVKNLYFSY…KSYYKNMYYS (235 aa)). 373–380 (GRTGSGKS) provides a ligand contact to ATP.

This sequence belongs to the ABC transporter superfamily. Drug exporter-2 (TC 3.A.1.117) family.

Its subcellular location is the cell membrane. It catalyses the reaction ATP + H2O + xenobioticSide 1 = ADP + phosphate + xenobioticSide 2.. The protein is Multidrug resistance-like ATP-binding protein MdlB (mdlB) of Buchnera aphidicola subsp. Baizongia pistaciae (strain Bp).